The sequence spans 429 residues: MSTDSIEVAIIGAGITGITLALGLLSRGIPVRVYERARDFHEIGAGIGFTPNAEWAMKVVDPRIQAAFKRVATPNASDWFQWVDGFNESGTDPRETEEQLLFKIYLGERGFEGCHRADFLGELARLLPEGVVTFQKALDTVEPAADNSLGQLLRFQDGTTATAHAVIGCDGIRSRVRQILLGEDHPTASAHYSHKYAARGLIPMDRAREALGEDKVATRFMHLGPDAHALTFPVSHGSLLNVVAFVTDPNPWPYADRWTAQGPKKDVTAAFSRFGPTMRTIIDLLPDPIDQWAVFDTYDHPPNTYSRGAVCIAGDAAHAAAPHHGAGAGCGVEDAAVLCAVLHMAAKKVNTAKTGSEGKAALITAAFETYDSVCRERAQWLVESSRVIGNLCHDEVYWRSHRIWDYDIDAMMRETAEVFEAQVAGVARN.

A helical membrane pass occupies residues 5 to 25 (SIEVAIIGAGITGITLALGLL). FAD-binding residues include Glu-35 and Gly-48. N-linked (GlcNAc...) asparagine glycans are attached at residues Asn-75 and Asn-87. FAD is bound at residue Arg-116. The active site involves Arg-199. The FAD site is built by Asp-315 and Ala-328.

Belongs to the paxM FAD-dependent monooxygenase family. It depends on FAD as a cofactor.

It localises to the membrane. It functions in the pathway secondary metabolite biosynthesis. Functionally, FAD-dependent monooxygenase; part of the gene cluster that mediates the biosynthesis of azaphilones, a class of fungal metabolites characterized by a highly oxygenated pyrano-quinone bicyclic core and exhibiting a broad range of bioactivities. In the first step, the non-reducing polyketide synthase azaA forms the hexaketide precursor from successive condensations of five malonyl-CoA units, presumably with a simple acetyl-CoA starter unit. The reactive polyketide chain then undergoes a PT-mediated C2-C7 cyclization to afford the aromatic ring and is eventually released as an aldehyde through the R-domain. The putative ketoreductase azaE is proposed to catalyze the reduction of the terminal ketone resulting in the early culture product FK17-P2a. The monooxygenase azaH was demonstrated to be the only enzyme required to convert FK17-P2a to azanigerone E. AzaH first hydroxylates the benzaldehyde intermediate FK17-P2a at C4, which triggers the formation of the pyran-ring to afford azanigerone E. In parallel, the 2,4-dimethylhexanoyl chain is synthesized by the HR-PKS azaB and is proposed to be transferred to the C4-hydroxyl of azanigerone E by the acyltransferase azaD directly from the ACP domain of azaB. Alternatively, the 2,4-dimethyl-hexanoyl chain may be offloaded from the HR-PKS as a carboxylic acid and converted to an acyl-CoA by azaF. The resulting acyl-CoA molecule could then be taken up as a substrate by AzaD to form azanigerone B. To yield the carboxylic acid substituent in azanigerone A, the hydroxypropyl side chain of azanigerone B would need to undergo a C-C oxidative cleavage catalyzed by cytochrome P450 AzaI. AzaI is proposed to act on a vicinal diol that leads to a C-C bond scission either through an alkoxyradical intermediate or a peroxy complex. In the biosynthesis of azanigerone A, azanigerone B first undergoes hydroxylation at C10, possibly catalyzed by one of the two FAD-dependent monooxygenases encoded in the cluster, azaG or azaL, resulting in the vicinal diol azanigerone C. Oxidative cleavage of azanigerone C by azaI would yield the corresponding aldehyde derivative of azanigerone A. Finally, the dehydrogenase azaJ is proposed to convert the aldehyde functional group into the carboxylic acid, completing the conversion from azanigerone B to azanigerone A. Alternatively, the oxidation of aldehyde to carboxylic acid may be catalyzed by the same P450 enzyme azaI via consecutive oxidation or by endogenous alcohol dehydrogenase. The polypeptide is FAD-dependent monooxygenase azaH (Aspergillus niger (strain ATCC 1015 / CBS 113.46 / FGSC A1144 / LSHB Ac4 / NCTC 3858a / NRRL 328 / USDA 3528.7)).